A 305-amino-acid polypeptide reads, in one-letter code: Acetaldehyde dehydrogenase 5 (305 aa).

Residue 11–14 (SGNI) coordinates NAD(+). C130 serves as the catalytic Acyl-thioester intermediate. NAD(+)-binding positions include 161 to 169 (SIGPGTRAN) and N272.

The protein belongs to the acetaldehyde dehydrogenase family.

The enzyme catalyses acetaldehyde + NAD(+) + CoA = acetyl-CoA + NADH + H(+). This is Acetaldehyde dehydrogenase 5 from Dechloromonas aromatica (strain RCB).